The sequence spans 461 residues: MDSGSAVDIISTLSDFLLVLIISNLSFKEALSTSRLSTRWRHICRETRNISFREDEIVTFADDSVARYYQRAALVAYMVGWVNNFTGGVVESFELRLSNSYAFEEGVTTLIEFAVSKNVKHLFLDLSEPRWVTNNDAAQLEPGLIKLPESFYKITSLVTLKLFGCRFEPSRLAKPGMVKTMFFRWIRLEMLSALIAKTPLLEILNIKNCWEIGLDAITGYNDRLMKLVFKYCSFSAQQTTLDVPNIQIFKYFGKVYRFEFASANKLMEEAYLDYREESRYNVSAGAIISGFLYSMLSAKTFTICPYVLQLIQECEDPVRLKAPMETRQLVLKTNFEPNEFVGIRFMLNSSPYLETLSFQMVGPRPIEEMVPQIDPEAYWGQNTSHECLKKTLKKVEVWSFYGGTHELRVLEYLIRYGRMLERVDLYQPIGLDDIQLLPIRAAADRVGEFEARSENLVVTFY.

An F-box domain is found at 7 to 55 (VDIISTLSDFLLVLIISNLSFKEALSTSRLSTRWRHICRETRNISFRED).

Part of a SCF (ASK-cullin-F-box) protein ligase complex. Interacts with ASK4.

It localises to the nucleus. The protein operates within protein modification; protein ubiquitination. Its function is as follows. Component of SCF(ASK-cullin-F-box) E3 ubiquitin ligase complexes, which may mediate the ubiquitination and subsequent proteasomal degradation of target proteins. This Arabidopsis thaliana (Mouse-ear cress) protein is F-box protein At3g62230.